We begin with the raw amino-acid sequence, 345 residues long: L-threonine 3-dehydrogenase (345 aa).

Cys-42 contacts Zn(2+). Active-site charge relay system residues include Thr-44 and His-47. His-67, Glu-68, Cys-97, Cys-100, Cys-103, and Cys-111 together coordinate Zn(2+). NAD(+)-binding positions include Ile-179, Asp-199, Arg-204, 266 to 268, and 290 to 291; these read LGI and IY.

Belongs to the zinc-containing alcohol dehydrogenase family. As to quaternary structure, homotetramer. Zn(2+) is required as a cofactor.

The protein localises to the cytoplasm. The enzyme catalyses L-threonine + NAD(+) = (2S)-2-amino-3-oxobutanoate + NADH + H(+). It participates in amino-acid degradation; L-threonine degradation via oxydo-reductase pathway; glycine from L-threonine: step 1/2. In terms of biological role, catalyzes the NAD(+)-dependent oxidation of L-threonine to 2-amino-3-ketobutyrate. This is L-threonine 3-dehydrogenase from Rhizobium etli (strain ATCC 51251 / DSM 11541 / JCM 21823 / NBRC 15573 / CFN 42).